The following is a 295-amino-acid chain: Glycine--tRNA ligase alpha subunit (295 aa).

This sequence belongs to the class-II aminoacyl-tRNA synthetase family. Tetramer of two alpha and two beta subunits.

The protein localises to the cytoplasm. The enzyme catalyses tRNA(Gly) + glycine + ATP = glycyl-tRNA(Gly) + AMP + diphosphate. The polypeptide is Glycine--tRNA ligase alpha subunit (Shouchella clausii (strain KSM-K16) (Alkalihalobacillus clausii)).